The sequence spans 171 residues: Co-chaperone protein HscB homolog (171 aa).

A J domain is found at 2 to 74 (NYFELFGLPI…LRRAEYLLSL (73 aa)).

It belongs to the HscB family. In terms of assembly, interacts with HscA and stimulates its ATPase activity.

Its function is as follows. Co-chaperone involved in the maturation of iron-sulfur cluster-containing proteins. Seems to help targeting proteins to be folded toward HscA. The chain is Co-chaperone protein HscB homolog from Vibrio cholerae serotype O1 (strain M66-2).